The sequence spans 175 residues: Nucleoside-triphosphatase THEP1 (175 aa).

Residues 8–15 (GSPGVGKS) and 99–106 (LVVIDEIG) each bind ATP.

It belongs to the THEP1 NTPase family.

It carries out the reaction a ribonucleoside 5'-triphosphate + H2O = a ribonucleoside 5'-diphosphate + phosphate + H(+). In terms of biological role, has nucleotide phosphatase activity towards ATP, GTP, CTP, TTP and UTP. May hydrolyze nucleoside diphosphates with lower efficiency. The chain is Nucleoside-triphosphatase THEP1 from Methanosarcina acetivorans (strain ATCC 35395 / DSM 2834 / JCM 12185 / C2A).